The sequence spans 509 residues: Tyrosine-protein phosphatase non-receptor type substrate 1 (509 aa).

A signal peptide spans 1-31 (MEPAGPAPGRLGPLLFCLLLSASCFCAGASG). The 107-residue stretch at 32–138 (KELKVTQADK…IVEPDTEIKS (107 aa)) folds into the Ig-like V-type domain. Residues 32–373 (KELKVTQADK…PDNNAYYNWN (342 aa)) lie on the Extracellular side of the membrane. 13 N-linked (GlcNAc...) asparagine glycosylation sites follow: Asn54, Asn93, Asn169, Asn181, Asn205, Asn209, Asn242, Asn246, Asn271, Asn293, Asn312, Asn320, and Asn345. Cys55 and Cys122 are disulfide-bonded. 2 consecutive Ig-like C1-type domains span residues 150-248 (PSSP…ANFS) and 255-349 (PTLK…HTVR). A disulfide bond links Cys172 and Cys229. Cys274 and Cys332 are joined by a disulfide. The chain crosses the membrane as a helical span at residues 374-394 (VFIGVGVACALLVVLLMAALY). At 395–509 (LLRIKQKKAK…EYASVQVQRK (115 aa)) the chain is on the cytoplasmic side. At Tyr436 the chain carries Phosphotyrosine; by Tyr-kinases. An SH2-binding motif is present at residues 436-439 (YADL). Residues 441 to 472 (LPKEKKPAPRVPEPNNHTEYASIETGKLPRPE) form a disordered region. Positions 446-451 (KPAPRV) match the SH3-binding motif. Phosphotyrosine; by Tyr-kinases occurs at positions 460, 477, and 501. 3 short sequence motifs (SH2-binding) span residues 460–463 (YASI), 477–480 (YADL), and 501–504 (YASV). Residues 485 to 509 (LNRAQPTPKPEPSFSEYASVQVQRK) form a disordered region. Polar residues predominate over residues 500–509 (EYASVQVQRK).

Binds PTPN11 when tyrosine-phosphorylated, except in macrophages, where it primarily binds PTPN6. Binds GRB2 in vitro. Binds FGR. Binds JAK2 irrespective of its phosphorylation status and forms a stable complex. Binds SCAP1 and/or SCAP2. The resulting complex recruits FYB1. Binds PTK2B. Interacts with TRIM2. In terms of processing, N-glycosylated. Phosphorylated on tyrosine residues in response to insulin, cell adhesion or epidermal growth factors. Dephosphorylated by PTPN11. Highly expressed in brain, spleen, lung, liver and kidney. Detected at lower levels in heart. Highly expressed in alveolar and peritoneal macrophages, and at lower levels in dendritic cells.

The protein resides in the membrane. In terms of biological role, immunoglobulin-like cell surface receptor for CD47. Acts as docking protein and induces translocation of PTPN6, PTPN11 and other binding partners from the cytosol to the plasma membrane. Supports adhesion of cerebellar neurons, neurite outgrowth and glial cell attachment. May play a key role in intracellular signaling during synaptogenesis and in synaptic function. Involved in the negative regulation of receptor tyrosine kinase-coupled cellular responses induced by cell adhesion, growth factors or insulin. Mediates negative regulation of phagocytosis, mast cell activation and dendritic cell activation. CD47 binding prevents maturation of immature dendritic cells and inhibits cytokine production by mature dendritic cells. Plays a role in antiviral immunity and limits new world arenavirus infection by decreasing virus internalization. Receptor for THBS1. Interaction with THBS1 stimulates phosphorylation of SIRPA. In response to THBS1, involved in ROS signaling in non-phagocytic cells, stimulating NADPH oxidase-derived ROS production. The sequence is that of Tyrosine-protein phosphatase non-receptor type substrate 1 (Sirpa) from Rattus norvegicus (Rat).